Reading from the N-terminus, the 264-residue chain is Thymidylate synthase (264 aa).

R21 contributes to the dUMP binding site. H51 serves as a coordination point for (6R)-5,10-methylene-5,6,7,8-tetrahydrofolate. 126 to 127 (RR) contacts dUMP. The Nucleophile role is filled by C146. DUMP contacts are provided by residues 166-169 (RSAD), N177, and 207-209 (HLY). D169 contributes to the (6R)-5,10-methylene-5,6,7,8-tetrahydrofolate binding site. A263 contacts (6R)-5,10-methylene-5,6,7,8-tetrahydrofolate.

This sequence belongs to the thymidylate synthase family. Bacterial-type ThyA subfamily. In terms of assembly, homodimer.

The protein resides in the cytoplasm. It catalyses the reaction dUMP + (6R)-5,10-methylene-5,6,7,8-tetrahydrofolate = 7,8-dihydrofolate + dTMP. It participates in pyrimidine metabolism; dTTP biosynthesis. Its function is as follows. Catalyzes the reductive methylation of 2'-deoxyuridine-5'-monophosphate (dUMP) to 2'-deoxythymidine-5'-monophosphate (dTMP) while utilizing 5,10-methylenetetrahydrofolate (mTHF) as the methyl donor and reductant in the reaction, yielding dihydrofolate (DHF) as a by-product. This enzymatic reaction provides an intracellular de novo source of dTMP, an essential precursor for DNA biosynthesis. The chain is Thymidylate synthase from Chromobacterium violaceum (strain ATCC 12472 / DSM 30191 / JCM 1249 / CCUG 213 / NBRC 12614 / NCIMB 9131 / NCTC 9757 / MK).